The sequence spans 718 residues: Polyribonucleotide nucleotidyltransferase (718 aa).

Residues D496 and D502 each coordinate Mg(2+). In terms of domain architecture, KH spans 563-622 (PRLLTIKIDPDMIGLVIGPGGKTIKGITEETGAKIDIEDDGTVTISAVDENKAKRARNIV). The region spanning 632 to 700 (GDVYAGRVTR…NKGRINLTRL (69 aa)) is the S1 motif domain.

In terms of assembly, may form homodimers or higher order multimers. Interacts with RNase E (rne). Mg(2+) is required as a cofactor.

The protein resides in the cytoplasm. It catalyses the reaction RNA(n+1) + phosphate = RNA(n) + a ribonucleoside 5'-diphosphate. Its function is as follows. Involved in mRNA degradation. Catalyzes the phosphorolysis of single-stranded polyribonucleotides processively in the 3'- to 5'-direction. This chain is Polyribonucleotide nucleotidyltransferase, found in Nostoc sp. (strain PCC 7120 / SAG 25.82 / UTEX 2576).